The sequence spans 685 residues: Polyphosphate kinase (685 aa).

An ATP-binding site is contributed by N45. 2 residues coordinate Mg(2+): R375 and R405. Catalysis depends on H435, which acts as the Phosphohistidine intermediate. The ATP site is built by Y468, R564, and H592.

It belongs to the polyphosphate kinase 1 (PPK1) family. Requires Mg(2+) as cofactor. In terms of processing, an intermediate of this reaction is the autophosphorylated ppk in which a phosphate is covalently linked to a histidine residue through a N-P bond.

The enzyme catalyses [phosphate](n) + ATP = [phosphate](n+1) + ADP. Functionally, catalyzes the reversible transfer of the terminal phosphate of ATP to form a long-chain polyphosphate (polyP). This Neisseria meningitidis serogroup B (strain ATCC BAA-335 / MC58) protein is Polyphosphate kinase.